A 412-amino-acid polypeptide reads, in one-letter code: Putative competence-damage inducible protein (412 aa).

It belongs to the CinA family.

This is Putative competence-damage inducible protein from Caldanaerobacter subterraneus subsp. tengcongensis (strain DSM 15242 / JCM 11007 / NBRC 100824 / MB4) (Thermoanaerobacter tengcongensis).